We begin with the raw amino-acid sequence, 683 residues long: Boron transporter 4 (683 aa).

The Cytoplasmic segment spans residues 1 to 38 (MEEERVDSSKRLFRGIVADLRGRALCYKEDWVAGLRSG). Residues 39–59 (FGILAPTTYIFFASALPVIAF) form a helical membrane-spanning segment. The Extracellular segment spans residues 60-80 (GEQLSRDTEGALSTVETLAST). Residues 81–101 (ALCGVIHSILGGQPLLILGVA) traverse the membrane as a helical segment. Residues 102–126 (EPTVLMYVYLYNFAIGRPELGKQLY) lie on the Cytoplasmic side of the membrane. Residues 127–147 (LAWAAWVCVWTALLLFVMAIL) traverse the membrane as a helical segment. Topologically, residues 148 to 160 (NTADIINRFTRVA) are extracellular. A helical membrane pass occupies residues 161 to 181 (GELFGMLISVLFIQQAIKGMV). The Cytoplasmic segment spans residues 182-200 (SEFGMPKDEDSKLEKYKFE). A helical transmembrane segment spans residues 201–221 (WLYTNGLLGLIFTFGLLYTAL). The Extracellular portion of the chain corresponds to 222-238 (KSRKARSWRYGTGWYRS). A helical transmembrane segment spans residues 239 to 259 (FIADYGVPLMVVVWTALSFST). Residues 260-294 (PSKLPSGVPRRLFSPLPWDSPSLSHWTVIKDMGKV) are Cytoplasmic-facing. The helical transmembrane segment at 295–315 (SPGYIFAAFIPALMIAGLYFF) threads the bilayer. The Extracellular portion of the chain corresponds to 316 to 335 (DHSVASQLAQQKEFNLKKPS). Residues 336 to 356 (AYHYDILLLGFMTLICGLLGL) traverse the membrane as a helical segment. Residues 357-477 (PPSNGVLPQS…EQRVSNLLQS (121 aa)) are Cytoplasmic-facing. Residues 478-498 (LLVAGAVLAMPAIKLIPTSIL) form a helical membrane-spanning segment. The Extracellular portion of the chain corresponds to 499–565 (WGYFAYMAID…QIFYFGLCYG (67 aa)). The helical transmembrane segment at 566–586 (VTWIPVAGIMFPVPFFLLIAI) threads the bilayer. Residues 587-683 (RQYILPKLFN…GDGDMSTTRE (97 aa)) lie on the Cytoplasmic side of the membrane. Disordered stretches follow at residues 617-638 (NPLE…GDAE) and 661-683 (KGNQ…TTRE).

It belongs to the anion exchanger (TC 2.A.31.3) family. Expressed in the distal sides of epidermal cells in the elongation zone of roots.

The protein resides in the membrane. Its function is as follows. Efflux-type boron transporter polarly localized in roots. Boron is essential for maintaining the integrity of plants cell walls. In Arabidopsis thaliana (Mouse-ear cress), this protein is Boron transporter 4 (BOR4).